The sequence spans 502 residues: Serine/threonine-protein kinase SKS1 (502 aa).

The Protein kinase domain occupies 10 to 338; the sequence is FRITAQIGSG…SEVSSLTSFT (329 aa). ATP contacts are provided by residues 16 to 24 and lysine 39; that span reads IGSGAYGLV. The active-site Proton acceptor is the aspartate 186. 2 stretches are compositionally biased toward low complexity: residues 376–391 and 399–410; these read QEQQ…QVQE and EQIQNQEQAQQQ. A disordered region spans residues 376–439; sequence QEQQQQQQQQ…GSMEKYEYTN (64 aa). Over residues 411-420 the composition is skewed to acidic residues; it reads QEEEDAEPES.

Belongs to the protein kinase superfamily. Ser/Thr protein kinase family.

The catalysed reaction is L-seryl-[protein] + ATP = O-phospho-L-seryl-[protein] + ADP + H(+). The enzyme catalyses L-threonyl-[protein] + ATP = O-phospho-L-threonyl-[protein] + ADP + H(+). May have a role in glucose regulation. The protein is Serine/threonine-protein kinase SKS1 (SKS1) of Saccharomyces cerevisiae (strain ATCC 204508 / S288c) (Baker's yeast).